We begin with the raw amino-acid sequence, 180 residues long: Protein GrpE (180 aa).

The disordered stretch occupies residues 1-25 (MSKKKAEDKQPIIKDEAVEEPKSDS).

The protein belongs to the GrpE family. In terms of assembly, homodimer.

It is found in the cytoplasm. Functionally, participates actively in the response to hyperosmotic and heat shock by preventing the aggregation of stress-denatured proteins, in association with DnaK and GrpE. It is the nucleotide exchange factor for DnaK and may function as a thermosensor. Unfolded proteins bind initially to DnaJ; upon interaction with the DnaJ-bound protein, DnaK hydrolyzes its bound ATP, resulting in the formation of a stable complex. GrpE releases ADP from DnaK; ATP binding to DnaK triggers the release of the substrate protein, thus completing the reaction cycle. Several rounds of ATP-dependent interactions between DnaJ, DnaK and GrpE are required for fully efficient folding. This Fructilactobacillus sanfranciscensis (Lactobacillus sanfranciscensis) protein is Protein GrpE.